The sequence spans 311 residues: Probable manganese-dependent inorganic pyrophosphatase (311 aa).

Mn(2+) contacts are provided by His-9, Asp-13, Asp-15, Asp-77, His-99, and Asp-151.

This sequence belongs to the PPase class C family. Homodimer. It depends on Mn(2+) as a cofactor.

It is found in the cytoplasm. The catalysed reaction is diphosphate + H2O = 2 phosphate + H(+). The polypeptide is Probable manganese-dependent inorganic pyrophosphatase (ppaC) (Streptococcus gordonii (strain Challis / ATCC 35105 / BCRC 15272 / CH1 / DL1 / V288)).